Consider the following 632-residue polypeptide: Basic helix-loop-helix ARNT-like protein 1 (632 aa).

The disordered stretch occupies residues 1-39 (MADQRMDISSTISDFMSPGPTDLLSGSLGTSGVDCNRKR). Residue Ser17 is modified to Phosphoserine; by GSK3-beta. Thr21 carries the phosphothreonine; by GSK3-beta modification. Positions 36–41 (NRKRKG) match the Nuclear localization signal motif. The region spanning 79–132 (NAREAHSQIEKRRRDKMNSFIDELASLVPTCNAMSRKLDKLTVLRMAVQHMKTL) is the bHLH domain. A Phosphoserine modification is found at Ser85. At Ser97 the chain carries Phosphoserine; by CK2. The Nuclear export signal 1 signature appears at 149-159 (LSDDELKHLIL). Positions 150-222 (SDDELKHLIL…EQLSSSDTAP (73 aa)) constitute a PAS 1 domain. A Glycyl lysine isopeptide (Lys-Gly) (interchain with G-Cter in SUMO2 and SUMO3) cross-link involves residue Lys259. Lys266 is covalently cross-linked (Glycyl lysine isopeptide (Lys-Gly) (interchain with G-Cter in SUMO); alternate). Residue Lys266 forms a Glycyl lysine isopeptide (Lys-Gly) (interchain with G-Cter in SUMO2); alternate linkage. The PAS 2 domain occupies 333–403 (QPANGEIRVK…CHRQVLQTRE (71 aa)). Residues 367–375 (LAYLPQELL) carry the Nuclear export signal 2 motif. In terms of domain architecture, PAC spans 408–451 (NCYKFKIKDGSFITLRSRWFSFMNPWTKEVEYIVSTNTVVLANV). Disordered regions lie at residues 465–498 (PPHSMDSMLPSGEGGPKRTHPTVPGIPGGTRAGA) and 517–601 (GSSP…SPSN). Positions 514–594 (RIRGSSPSSC…IGIDMIDNDQ (81 aa)) are interaction with CIART. The span at 517-527 (GSSPSSCGSSP) shows a compositional bias: low complexity. Lys544 bears the N6-acetyllysine mark.

In terms of assembly, component of the circadian clock oscillator which includes the CRY1/2 proteins, CLOCK or NPAS2, BMAL1 or BMAL2, CSNK1D and/or CSNK1E, TIMELESS and the PER1/2/3 proteins. Forms a heterodimer with CLOCK. The CLOCK-BMAL1 heterodimer is required for E-box-dependent transactivation, for CLOCK nuclear translocation and degradation, and, for phosphorylation of both CLOCK and BMAL1. Part of a nuclear complex which also includes RACK1 and PRKCA; RACK1 and PRKCA are recruited to the complex in a circadian manner. Interacts with NPAS2. Interacts with EZH2. Interacts with SUMO3. Interacts with SIRT1. Interacts with AHR. Interacts with ID1, ID2 and ID3. Interacts with DDX4. Interacts with OGT. Interacts with EED and SUZ12. Interacts with MTA1. Interacts with CIART. Interacts with HSP90. Interacts with KAT2B and EP300. Interacts with BHLHE40/DEC1 and BHLHE41/DEC2. Interacts with RELB and the interaction is enhanced in the presence of CLOCK. Interacts with PER1, PER2, CRY1 and CRY2 and this interaction requires a translocation to the nucleus. Interaction of the CLOCK-BMAL1 heterodimer with PER or CRY inhibits transcription activation. Interaction of the CLOCK-BMAL1 with CRY1 is independent of DNA but with PER2 is off DNA. The CLOCK-BMAL1 heterodimer interacts with GSK3B. Interacts with KDM5A. Interacts with KMT2A; in a circadian manner. Interacts with UBE3A. Interacts with PRKCG. Interacts with MAGEL2. Interacts with NCOA2. Interacts with THRAP3. The CLOCK-BMAL1 heterodimer interacts with PASD1. Interacts with PASD1. Interacts with USP9X. Interacts with PIWIL2 (via PIWI domain). Interacts with HDAC3. Interacts with HNF4A. Post-translationally, ubiquitinated, leading to its proteasomal degradation. Deubiquitinated by USP9X. O-glycosylated; contains O-GlcNAc. O-glycosylation by OGT prevents protein degradation by inhibiting ubiquitination. It also stabilizes the CLOCK-BMAL1 heterodimer thereby increasing CLOCK-BMAL1-mediated transcription of genes in the negative loop of the circadian clock such as PER1/2/3 and CRY1/2. In terms of processing, acetylated on Lys-544 by CLOCK during the repression phase of the circadian cycle. Acetylation facilitates recruitment of CRY1 protein and initiates the repression phase of the circadian cycle. Acetylated at Lys-544 by KAT5 during the activation phase of the cycle, leading to recruitment of the positive transcription elongation factor b (P-TEFb) and BRD4, followed by productive elongation of circadian transcripts. Deacetylated by SIRT1, which may result in decreased protein stability. Post-translationally, phosphorylated upon dimerization with CLOCK. Phosphorylation enhances the transcriptional activity, alters the subcellular localization and decreases the stability of the CLOCK-BMAL1 heterodimer by promoting its degradation. Phosphorylation shows circadian variations in the liver with a peak between CT10 to CT14. Phosphorylation at Ser-97 by CK2 is essential for its nuclear localization, its interaction with CLOCK and controls CLOCK nuclear entry. Dephosphorylation at Ser-85 is important for dimerization with CLOCK and transcriptional activity. Sumoylated on Lys-266 upon dimerization with CLOCK. Predominantly conjugated to poly-SUMO2/3 rather than SUMO1 and the level of these conjugates undergo rhythmic variation, peaking at CT9-CT12. Sumoylation localizes it exclusively to the PML body and promotes its ubiquitination in the PML body, ubiquitin-dependent proteasomal degradation and the transcriptional activity of the CLOCK-BMAL1 heterodimer. In terms of processing, undergoes lysosome-mediated degradation in a time-dependent manner in the liver. Expressed in liver and testis (at protein level). Expressed in the suprachiasmatic nucleus (SCN) in a circadian manner.

The protein resides in the nucleus. It is found in the cytoplasm. It localises to the PML body. With respect to regulation, the redox state of the cell can modulate the transcriptional activity of the CLOCK-BMAL1 and NPAS2-BMAL1 heterodimers; NADH and NADPH enhance the DNA-binding activity of the heterodimers. In terms of biological role, transcriptional activator which forms a core component of the circadian clock. The circadian clock, an internal time-keeping system, regulates various physiological processes through the generation of approximately 24 hour circadian rhythms in gene expression, which are translated into rhythms in metabolism and behavior. It is derived from the Latin roots 'circa' (about) and 'diem' (day) and acts as an important regulator of a wide array of physiological functions including metabolism, sleep, body temperature, blood pressure, endocrine, immune, cardiovascular, and renal function. Consists of two major components: the central clock, residing in the suprachiasmatic nucleus (SCN) of the brain, and the peripheral clocks that are present in nearly every tissue and organ system. Both the central and peripheral clocks can be reset by environmental cues, also known as Zeitgebers (German for 'timegivers'). The predominant Zeitgeber for the central clock is light, which is sensed by retina and signals directly to the SCN. The central clock entrains the peripheral clocks through neuronal and hormonal signals, body temperature and feeding-related cues, aligning all clocks with the external light/dark cycle. Circadian rhythms allow an organism to achieve temporal homeostasis with its environment at the molecular level by regulating gene expression to create a peak of protein expression once every 24 hours to control when a particular physiological process is most active with respect to the solar day. Transcription and translation of core clock components (CLOCK, NPAS2, BMAL1, BMAL2, PER1, PER2, PER3, CRY1 and CRY2) plays a critical role in rhythm generation, whereas delays imposed by post-translational modifications (PTMs) are important for determining the period (tau) of the rhythms (tau refers to the period of a rhythm and is the length, in time, of one complete cycle). A diurnal rhythm is synchronized with the day/night cycle, while the ultradian and infradian rhythms have a period shorter and longer than 24 hours, respectively. Disruptions in the circadian rhythms contribute to the pathology of cardiovascular diseases, cancer, metabolic syndromes and aging. A transcription/translation feedback loop (TTFL) forms the core of the molecular circadian clock mechanism. Transcription factors, CLOCK or NPAS2 and BMAL1 or BMAL2, form the positive limb of the feedback loop, act in the form of a heterodimer and activate the transcription of core clock genes and clock-controlled genes (involved in key metabolic processes), harboring E-box elements (5'-CACGTG-3') within their promoters. The core clock genes: PER1/2/3 and CRY1/2 which are transcriptional repressors form the negative limb of the feedback loop and interact with the CLOCK|NPAS2-BMAL1|BMAL2 heterodimer inhibiting its activity and thereby negatively regulating their own expression. This heterodimer also activates nuclear receptors NR1D1/2 and RORA/B/G, which form a second feedback loop and which activate and repress BMAL1 transcription, respectively. BMAL1 positively regulates myogenesis and negatively regulates adipogenesis via the transcriptional control of the genes of the canonical Wnt signaling pathway. Plays a role in normal pancreatic beta-cell function; regulates glucose-stimulated insulin secretion via the regulation of antioxidant genes NFE2L2/NRF2 and its targets SESN2, PRDX3, CCLC and CCLM. Negatively regulates the mTORC1 signaling pathway; regulates the expression of MTOR and DEPTOR. Controls diurnal oscillations of Ly6C inflammatory monocytes; rhythmic recruitment of the PRC2 complex imparts diurnal variation to chemokine expression that is necessary to sustain Ly6C monocyte rhythms. Regulates the expression of HSD3B2, STAR, PTGS2, CYP11A1, CYP19A1 and LHCGR in the ovary and also the genes involved in hair growth. Plays an important role in adult hippocampal neurogenesis by regulating the timely entry of neural stem/progenitor cells (NSPCs) into the cell cycle and the number of cell divisions that take place prior to cell-cycle exit. Regulates the circadian expression of CIART and KLF11. The CLOCK-BMAL1 heterodimer regulates the circadian expression of SERPINE1/PAI1, VWF, B3, CCRN4L/NOC, NAMPT, DBP, MYOD1, PPARGC1A, PPARGC1B, SIRT1, GYS2, F7, NGFR, GNRHR, BHLHE40/DEC1, ATF4, MTA1, KLF10 and also genes implicated in glucose and lipid metabolism. Promotes rhythmic chromatin opening, regulating the DNA accessibility of other transcription factors. May play a role in spermatogenesis; contributes to the chromatoid body assembly and physiology. The NPAS2-BMAL1 heterodimer positively regulates the expression of MAOA, F7 and LDHA and modulates the circadian rhythm of daytime contrast sensitivity by regulating the rhythmic expression of adenylate cyclase type 1 (ADCY1) in the retina. The preferred binding motif for the CLOCK-BMAL1 heterodimer is 5'-CACGTGA-3', which contains a flanking adenine nucleotide at the 3-prime end of the canonical 6-nucleotide E-box sequence. CLOCK specifically binds to the half-site 5'-CAC-3', while BMAL1 binds to the half-site 5'-GTGA-3'. The CLOCK-BMAL1 heterodimer also recognizes the non-canonical E-box motifs 5'-AACGTGA-3' and 5'-CATGTGA-3'. Essential for the rhythmic interaction of CLOCK with ASS1 and plays a critical role in positively regulating CLOCK-mediated acetylation of ASS1. Plays a role in protecting against lethal sepsis by limiting the expression of immune checkpoint protein CD274 in macrophages in a PKM2-dependent manner. Regulates the diurnal rhythms of skeletal muscle metabolism via transcriptional activation of genes promoting triglyceride synthesis (DGAT2) and metabolic efficiency (COQ10B). This is Basic helix-loop-helix ARNT-like protein 1 (Bmal1) from Mus musculus (Mouse).